Consider the following 284-residue polypeptide: Diaminopimelate epimerase (284 aa).

Substrate contacts are provided by Asn-13 and Asn-70. Residue Cys-79 is the Proton donor of the active site. Substrate is bound by residues Gly-80–Asn-81, Asn-167, Asn-200, and Glu-218–Arg-219. Cys-227 acts as the Proton acceptor in catalysis. Gly-228–Thr-229 is a substrate binding site.

The protein belongs to the diaminopimelate epimerase family. Homodimer.

Its subcellular location is the cytoplasm. It carries out the reaction (2S,6S)-2,6-diaminopimelate = meso-2,6-diaminopimelate. The protein operates within amino-acid biosynthesis; L-lysine biosynthesis via DAP pathway; DL-2,6-diaminopimelate from LL-2,6-diaminopimelate: step 1/1. In terms of biological role, catalyzes the stereoinversion of LL-2,6-diaminopimelate (L,L-DAP) to meso-diaminopimelate (meso-DAP), a precursor of L-lysine and an essential component of the bacterial peptidoglycan. The sequence is that of Diaminopimelate epimerase from Prochlorococcus marinus (strain NATL2A).